Reading from the N-terminus, the 183-residue chain is MDFYSLFLIAIALSLDAFGVALCIGLNNNVDLKYKSSCAIYFGFFQFLFAIIGGYAGFLFNKYIATMPQIVGGVVICIVGIIMIKEGIENEDSCKILKPGMNIILGISVSIDAMVVGFTALNKIQSGLLILRDTLFIGIVTLFVSILAFITSKYLKKIDVIGKYADYIGGIILIFFGLKMIFF.

Transmembrane regions (helical) follow at residues 6-26 (LFLIAIALSLDAFGVALCIGL), 40-60 (IYFGFFQFLFAIIGGYAGFLF), 64-84 (IATMPQIVGGVVICIVGIIMI), 101-121 (MNIILGISVSIDAMVVGFTAL), 135-155 (LFIGIVTLFVSILAFITSKYL), and 158-178 (IDVIGKYADYIGGIILIFFGL).

This sequence belongs to the MntP (TC 9.B.29) family.

Its subcellular location is the cell membrane. Functionally, probably functions as a manganese efflux pump. This Clostridium tetani (strain Massachusetts / E88) protein is Putative manganese efflux pump MntP.